A 112-amino-acid chain; its full sequence is Nucleoid-associated protein Pfl01_1806 (112 aa).

Belongs to the YbaB/EbfC family. Homodimer.

It localises to the cytoplasm. The protein localises to the nucleoid. Functionally, binds to DNA and alters its conformation. May be involved in regulation of gene expression, nucleoid organization and DNA protection. The sequence is that of Nucleoid-associated protein Pfl01_1806 from Pseudomonas fluorescens (strain Pf0-1).